A 1155-amino-acid chain; its full sequence is MAKKNTKKDNKNQNLRCPIVCVLGHVDHGKCLMPHEKVLTEYGEIKIEDLFKIGKEIVEKDELKEIRKLNIKVHTLNENGEIKIINAPYVWKLKHKGKMIKVKLKNWHSITTTPEHPFLTNNGWIKAENIKKGMYVAIPRKIYGNEDFEKFIEFINSKILTNELIVKVNEKDLKNVELPSTKIYKKQKNVFRSEDIIEHNLNIEKISFSPRIHRCGKPQHYIKLPKSLNEWKAIFYFAGVMFGDGCVDRIANNDEEVFNKLKSLNNLGIEVERIKRKSSYEIIFKNGKNALINLLKILFDYPSEKKSHNIKIPQILYIAPKELVAEFIKGYFDADGYVNLRQNRIEVISASKEFIEGLSILLLRFEITSKIYEIKKSYKETKKKYYQLNIVGKRNLKNFKNIGFSIKYKEENLNKIIEKSRKSEKYPINKDMKRLRILFGMTRNEVNVSYYAKYENGKEIPSYEIVKKFLNSLKPKNLDKKIKVLEGKERDVNYLKAFESDGLIENGRLTKLGREALNIWKNHEFGKENIDYMKSLIENIAFVEVEDVEIIDYDGYVYDLTTETHNFIANGIVVHNTTLLDKIRKTRVAKREAGGITQHIGASEIPIDVIKRLCGDLLKMLKADLKIPGLLVIDTPGHEAFTSLRKRGGALADIAILVVDINEGFKPQTVEAVNILRQCKTPFVVAANKIDLIPGWNSKEGPFILNFNEKNQHPNALTEFEIRLYENIIKPLNELGFDADLYSRVQDVTKTVCIIPVSAVTGEGIPDLLMMVAGLAQKFLEDRLKLNVEGYAKGTILEVKEEKGLGTTIDAIIYDGIAKRGDYLVVGLPDDVLVTRVKALLKPKPLDEMRDPRDKFKPVNEVTAAAGVKIAAPELDKVIAGCPIRIVPKDKIEEAKEEVMKEVEEAKIEVDDEGILIKADTLGSLEALANELRKAGVKIKKAEVGDVTKKDVIEVASYKQSNPLHGAIVAFNVKILPEAQKEIEKYDIKVFLDNIIYKLVEDFTEWIKKEEERIKYGEFEKLIKPAIIRILPDCIFRQKDPAICGVEVLCGTLRVGAPLMREDGMQLGYVREIKDRGENVKEAKAGKAVSIAIDGRVVLKRHVDEGDYMYVAVPESHVRELYHKYMDRLRNDEKEALLRYMELMQKLTNNIFWGR.

Residues 237–367 (FAGVMFGDGC…LSILLLRFEI (131 aa)) form the DOD-type homing endonuclease domain. The 221-residue stretch at 561-781 (TTETHNFIAN…VAGLAQKFLE (221 aa)) folds into the tr-type G domain. Residues 634–638 (DTPGH) and 688–691 (NKID) contribute to the GTP site.

It belongs to the TRAFAC class translation factor GTPase superfamily. Classic translation factor GTPase family. IF-2 subfamily. Post-translationally, this protein undergoes a protein self splicing that involves a post-translational excision of the intervening region (intein) followed by peptide ligation.

Functionally, function in general translation initiation by promoting the binding of the formylmethionine-tRNA to ribosomes. Seems to function along with eIF-2. The polypeptide is Probable translation initiation factor IF-2 (infB) (Methanocaldococcus jannaschii (strain ATCC 43067 / DSM 2661 / JAL-1 / JCM 10045 / NBRC 100440) (Methanococcus jannaschii)).